Consider the following 147-residue polypeptide: Cilia- and flagella-associated protein 90 (147 aa).

The interval 1-36 (MEDDEEETTASTLRGKPRPPPVSAQSAFSYIPPRRL) is disordered.

As to quaternary structure, microtubule inner protein component of sperm flagellar doublet microtubules.

The protein localises to the cytoplasm. Its subcellular location is the cytoskeleton. It localises to the cilium axoneme. The protein resides in the flagellum axoneme. In terms of biological role, microtubule inner protein (MIP) part of the dynein-decorated doublet microtubules (DMTs) in cilia axoneme, which is required for motile cilia beating. This chain is Cilia- and flagella-associated protein 90, found in Homo sapiens (Human).